The following is a 732-amino-acid chain: Glycine--tRNA ligase (732 aa).

A mitochondrion-targeting transit peptide spans 1–27; it reads MRHVLSLVYKCSVFSKQVTVFSNHLRL. Residues 61-117 enclose the WHEP-TRS domain; sequence ILAPLRANVKEQGDLVRKLKEEKAPEIDIKKAVAELKTRKKILEDKELSLAPAEDLF. Residue glutamate 297 participates in glycine binding. ATP is bound by residues 329-331 and 340-341; these read RNE and RV. Residue glutamate 348 participates in glycine binding. 453–454 provides a ligand contact to ATP; that stretch reads EC. Residue 572 to 574 coordinates glycine; sequence EPS. Arginine 579 is a binding site for ATP.

This sequence belongs to the class-II aminoacyl-tRNA synthetase family. As to quaternary structure, homodimer.

It localises to the mitochondrion. The protein resides in the cytoplasm. It is found in the cell projection. The protein localises to the axon. It catalyses the reaction tRNA(Gly) + glycine + ATP = glycyl-tRNA(Gly) + AMP + diphosphate. The catalysed reaction is 2 ATP + H(+) = P(1),P(4)-bis(5'-adenosyl) tetraphosphate + diphosphate. Its function is as follows. Catalyzes the ATP-dependent ligation of glycine to the 3'-end of its cognate tRNA, via the formation of an aminoacyl-adenylate intermediate (Gly-AMP). Also produces diadenosine tetraphosphate (Ap4A), a universal pleiotropic signaling molecule needed for cell regulation pathways, by direct condensation of 2 ATPs. Thereby, may play a special role in Ap4A homeostasis. Required for terminal arborization of both dendrites and axons during development. This is Glycine--tRNA ligase from Bombyx mori (Silk moth).